We begin with the raw amino-acid sequence, 96 residues long: Small ribosomal subunit protein uS19 (96 aa).

Residues 1–30 (MARSIKKGPFADKHLTKKVEDANKGNKKSV) are disordered. The span at 9 to 24 (PFADKHLTKKVEDANK) shows a compositional bias: basic and acidic residues.

It belongs to the universal ribosomal protein uS19 family.

Its function is as follows. Protein S19 forms a complex with S13 that binds strongly to the 16S ribosomal RNA. The protein is Small ribosomal subunit protein uS19 of Anaeromyxobacter sp. (strain Fw109-5).